The chain runs to 247 residues: Flagellin B1 (247 aa).

A propeptide spanning residues 1 to 20 (MNKLLRKVRKAFSLKADNKA) is cleaved from the precursor.

It belongs to the archaeal flagellin family. In terms of processing, glycosylated.

Its subcellular location is the archaeal flagellum. Functionally, flagellin is the subunit protein which polymerizes to form the filaments of archaeal flagella. This chain is Flagellin B1, found in Thermoplasma volcanium (strain ATCC 51530 / DSM 4299 / JCM 9571 / NBRC 15438 / GSS1).